A 79-amino-acid chain; its full sequence is Dolichol phosphate-mannose biosynthesis regulatory protein (79 aa).

2 helical membrane passes run 8-28 (IGFVMVLFRIFVFGYYTTWVI) and 50-70 (IIIPLVLLVVGITAIGTFLGL).

The protein belongs to the DPM2 family. In terms of assembly, component of the dolichol-phosphate mannose (DPM) synthase complex composed of dpm1, dpm2 and dpm3.

It is found in the endoplasmic reticulum membrane. The protein operates within protein modification; protein glycosylation. In terms of biological role, regulates the biosynthesis of dolichol phosphate-mannose. Regulatory subunit of the dolichol-phosphate mannose (DPM) synthase complex; essential for the ER localization and stable expression of dpm1. The polypeptide is Dolichol phosphate-mannose biosynthesis regulatory protein (dpm2-1) (Dictyostelium discoideum (Social amoeba)).